Consider the following 391-residue polypeptide: Elongation factor Tu (391 aa).

One can recognise a tr-type G domain in the interval lysine 10–alanine 201. The tract at residues glycine 19 to threonine 26 is G1. Glycine 19 to threonine 26 is a GTP binding site. A Mg(2+)-binding site is contributed by threonine 26. Positions glycine 55–serine 59 are G2. Positions aspartate 76–glycine 79 are G3. GTP contacts are provided by residues aspartate 76–histidine 80 and asparagine 131–aspartate 134. The tract at residues asparagine 131–aspartate 134 is G4. The tract at residues serine 169–leucine 171 is G5.

The protein belongs to the TRAFAC class translation factor GTPase superfamily. Classic translation factor GTPase family. EF-Tu/EF-1A subfamily. As to quaternary structure, monomer.

It localises to the cytoplasm. It carries out the reaction GTP + H2O = GDP + phosphate + H(+). Functionally, GTP hydrolase that promotes the GTP-dependent binding of aminoacyl-tRNA to the A-site of ribosomes during protein biosynthesis. This Cereibacter sphaeroides (strain ATCC 17029 / ATH 2.4.9) (Rhodobacter sphaeroides) protein is Elongation factor Tu.